Reading from the N-terminus, the 272-residue chain is Probable prolyl 4-hydroxylase 11 (272 aa).

Residues 1 to 55 (MSKSTSVSTILYLRQRLQGLKIYETSDLIQHINTFDELVGEQVSVDVKIEEKTKD) lie on the Cytoplasmic side of the membrane. The helical; Signal-anchor for type II membrane protein transmembrane segment at 56 to 80 (MILLCSLSPLLTTLTCSMVKVAASL) threads the bilayer. The Lumenal portion of the chain corresponds to 81–272 (RFPNERWLEV…KRHCLSLNLF (192 aa)). The 94-residue stretch at 179 to 272 (NGETLQVINY…KRHCLSLNLF (94 aa)) folds into the Fe2OG dioxygenase domain. H197, D199, and H261 together coordinate Fe cation.

Belongs to the P4HA family. The cofactor is Fe(2+). It depends on L-ascorbate as a cofactor.

It is found in the endoplasmic reticulum membrane. It carries out the reaction L-prolyl-[collagen] + 2-oxoglutarate + O2 = trans-4-hydroxy-L-prolyl-[collagen] + succinate + CO2. Its function is as follows. Catalyzes the post-translational formation of 4-hydroxyproline in -Xaa-Pro-Gly- sequences in proline-rich peptide sequences of plant glycoproteins and other proteins. Hydroxyprolines are important constituent of many plant cell wall glycoproteins such as extensins, hydroxyproline-rich glycoproteins, lectins and arabinogalactan proteins. The polypeptide is Probable prolyl 4-hydroxylase 11 (Arabidopsis thaliana (Mouse-ear cress)).